Consider the following 388-residue polypeptide: Ras-related protein Rab-26 (388 aa).

Positions 1 to 115 are disordered; sequence MASTAVGLGG…HHHSQLSLTG (115 aa). The segment covering 7-21 has biased composition (gly residues); it reads GLGGGEGDPGAGGPP. Basic and acidic residues predominate over residues 47–56; sequence RIEELRRRPF. The segment covering 67 to 86 has biased composition (low complexity); sequence PASVSASITTTTTQQQQQHH. Over residues 87-109 the composition is skewed to basic residues; it reads NPSHHHQSSHHQPSHHHHHHHHS. A GTP-binding site is contributed by 197-204; that stretch reads GDSGVGKT. Residues 219-228 carry the Effector region motif; sequence SFSATVGIAL. Residues 246-250 and 304-307 contribute to the GTP site; these read DTAGQ and NKAD. The S-palmitoyl cysteine moiety is linked to residue C382. Position 385 is a cysteine methyl ester (C385). The S-geranylgeranyl cysteine moiety is linked to residue C385. Residues 386–388 constitute a propeptide, removed in mature form; the sequence is RNM.

The protein belongs to the small GTPase superfamily. Rab family.

The protein localises to the cell membrane. Its function is as follows. Participates in exocrine secretion. The polypeptide is Ras-related protein Rab-26 (Drosophila melanogaster (Fruit fly)).